Here is a 644-residue protein sequence, read N- to C-terminus: Phosphomethylpyrimidine synthase (644 aa).

Residues Asn-236, Met-265, Tyr-294, His-330, 350–352 (SRG), 391–394 (DGLR), and Glu-430 contribute to the substrate site. His-434 contributes to the Zn(2+) binding site. Residue Tyr-457 coordinates substrate. Position 498 (His-498) interacts with Zn(2+). [4Fe-4S] cluster-binding residues include Cys-578, Cys-581, and Cys-586. The disordered stretch occupies residues 623 to 644 (RQKSEEFKASGSELYHPAVEAE).

This sequence belongs to the ThiC family. As to quaternary structure, homodimer. It depends on [4Fe-4S] cluster as a cofactor.

It carries out the reaction 5-amino-1-(5-phospho-beta-D-ribosyl)imidazole + S-adenosyl-L-methionine = 4-amino-2-methyl-5-(phosphooxymethyl)pyrimidine + CO + 5'-deoxyadenosine + formate + L-methionine + 3 H(+). Its pathway is cofactor biosynthesis; thiamine diphosphate biosynthesis. Catalyzes the synthesis of the hydroxymethylpyrimidine phosphate (HMP-P) moiety of thiamine from aminoimidazole ribotide (AIR) in a radical S-adenosyl-L-methionine (SAM)-dependent reaction. In Aliivibrio fischeri (strain MJ11) (Vibrio fischeri), this protein is Phosphomethylpyrimidine synthase.